Here is a 351-residue protein sequence, read N- to C-terminus: Probable sugar phosphate/phosphate translocator At5g11230 (351 aa).

10 helical membrane-spanning segments follow: residues 15–35 (IVLS…VIVY), 49–69 (FPIS…FLII), 89–109 (VVPI…AYIY), 113–133 (SFIQ…GVLF), 141–161 (DTMM…YGEA), 165–185 (VWGV…LVLI), 205–225 (VAPC…FPVL), 236–256 (AIFG…FLLV), 263–283 (TMNV…WSVI), and 286–306 (TVTP…AYYN). The EamA domain occupies 38-156 (YILDKKMYNW…LSISFGVAIA (119 aa)). Positions 321–351 (KKIQQADEESGRLLEEREGDVEGKKNDQSGN) are disordered.

The protein belongs to the TPT transporter family. TPT (TC 2.A.7.9) subfamily.

The protein localises to the membrane. This Arabidopsis thaliana (Mouse-ear cress) protein is Probable sugar phosphate/phosphate translocator At5g11230.